The primary structure comprises 60 residues: Large ribosomal subunit protein bL33 (60 aa).

This sequence belongs to the bacterial ribosomal protein bL33 family.

The protein is Large ribosomal subunit protein bL33 of Chlorobium phaeovibrioides (strain DSM 265 / 1930) (Prosthecochloris vibrioformis (strain DSM 265)).